The following is a 148-amino-acid chain: MEVILREDIENLGTRGQLVKVAPGYARNFLLPKRMAVAATEANRKIVEQERQAHLRKETKIKGEAEELAKIMTGVTVRISQKAGENDQLFGSVTSKDIADALTAQNYNIDRRKIQLDEPIKTLGEFKIPVRLYKDVVAEITVIVAKEE.

It belongs to the bacterial ribosomal protein bL9 family.

Its function is as follows. Binds to the 23S rRNA. This chain is Large ribosomal subunit protein bL9, found in Solibacter usitatus (strain Ellin6076).